The following is a 461-amino-acid chain: Photosystem II CP43 reaction center protein (461 aa).

Residues 1 to 2 constitute a propeptide that is removed on maturation; the sequence is ME. Residue T3 is modified to N-acetylthreonine. Phosphothreonine is present on T3. Transmembrane regions (helical) follow at residues 57–81, 122–143, 166–188, 243–263, and 279–300; these read LFEV…PHIA, LIGP…KDKN, KAMY…RVIT, TPWP…LSYS, and WFNN…ASQS. Position 355 (E355) interacts with [CaMn4O5] cluster. A helical transmembrane segment spans residues 435-459; it reads RARAAAAGFEKGIDRFDEPVLSMRP.

Belongs to the PsbB/PsbC family. PsbC subfamily. In terms of assembly, PSII is composed of 1 copy each of membrane proteins PsbA, PsbB, PsbC, PsbD, PsbE, PsbF, PsbH, PsbI, PsbJ, PsbK, PsbL, PsbM, PsbT, PsbX, PsbY, PsbZ, Psb30/Ycf12, at least 3 peripheral proteins of the oxygen-evolving complex and a large number of cofactors. It forms dimeric complexes. The cofactor is Binds multiple chlorophylls and provides some of the ligands for the Ca-4Mn-5O cluster of the oxygen-evolving complex. It may also provide a ligand for a Cl- that is required for oxygen evolution. PSII binds additional chlorophylls, carotenoids and specific lipids.. Phosphorylated in vitro.

It is found in the plastid. It localises to the chloroplast thylakoid membrane. Functionally, one of the components of the core complex of photosystem II (PSII). It binds chlorophyll and helps catalyze the primary light-induced photochemical processes of PSII. PSII is a light-driven water:plastoquinone oxidoreductase, using light energy to abstract electrons from H(2)O, generating O(2) and a proton gradient subsequently used for ATP formation. The protein is Photosystem II CP43 reaction center protein of Chlamydomonas reinhardtii (Chlamydomonas smithii).